Reading from the N-terminus, the 407-residue chain is Phosphopentomutase (407 aa).

The Mn(2+) site is built by Asp-10, Asp-306, His-311, Asp-347, His-348, and His-359.

The protein belongs to the phosphopentomutase family. Mn(2+) serves as cofactor.

The protein localises to the cytoplasm. It catalyses the reaction 2-deoxy-alpha-D-ribose 1-phosphate = 2-deoxy-D-ribose 5-phosphate. The enzyme catalyses alpha-D-ribose 1-phosphate = D-ribose 5-phosphate. It functions in the pathway carbohydrate degradation; 2-deoxy-D-ribose 1-phosphate degradation; D-glyceraldehyde 3-phosphate and acetaldehyde from 2-deoxy-alpha-D-ribose 1-phosphate: step 1/2. In terms of biological role, isomerase that catalyzes the conversion of deoxy-ribose 1-phosphate (dRib-1-P) and ribose 1-phosphate (Rib-1-P) to deoxy-ribose 5-phosphate (dRib-5-P) and ribose 5-phosphate (Rib-5-P), respectively. The sequence is that of Phosphopentomutase from Yersinia pseudotuberculosis serotype O:1b (strain IP 31758).